Consider the following 410-residue polypeptide: Lipid droplet-regulating VLDL assembly factor AUP1 (410 aa).

Position 1 is an N-acetylmethionine (M1). Residues 1–20 (MELPSGPGPERLFDSHRLPG) are Cytoplasmic-facing. S5 is subject to Phosphoserine. An intramembrane segment occupies 21–41 (DCFLLLVLLLYAPVGFCLLVL). Residues 42 to 410 (RLFLGIHVFL…FTERRAQEAD (369 aa)) are Cytoplasmic-facing. Residues 255–295 (TGTRLTPADKAEHMKRQRHPRLRPQSAQSSFPPSPGPSPDV) are disordered. 2 positions are modified to phosphoserine: S288 and S292. A CUE domain is found at 296 to 338 (QLATLAQRVKEVLPHVPLGVIQRDLAKTGCVDLTITNLLEGAV). The segment at 350–369 (QSLPTASASKFPSSGPVTPQ) is disordered. At S363 the chain carries Phosphoserine. T367 is subject to Phosphothreonine.

Belongs to the AUP1 family. Identified in a complex that contains SEL1L, OS9, FAF2/UBXD8, UBE2J1/UBC6E and AUP1. Interacts with the cytoplasmic tail of ITGA2B, ITGA1, ITGA2, ITGA5, ITGAV and ITGAM. Interacts (via C-terminus) with ubiquitin-conjugating enzyme UBE2G2; the interaction recruits UBE2G2 to lipid droplets. Interacts with ubiquitin ligases AMFR/gp78 and RNF139/TRC8; this promotes interaction of UBE2G2 with AMFR and RNF139. Interacts with apolipoprotein APOB. In terms of assembly, (Microbial infection) Interacts with Dengue virus NS4A; the interaction occurs in the presence of Dengue virus NS4B and induces lipophagy which facilitates production of virus progeny. Monoubiquitinated and diubiquitinated. Post-translationally, (Microbial infection) Not ubiquitinated following Dengue virus infection. As to expression, detected in blood platelets and leukocytes (at protein level). Ubiquitous. Highly expressed in placenta, liver, kidney, skeletal muscle, heart and brain.

The protein resides in the endoplasmic reticulum membrane. It localises to the lipid droplet. It is found in the cytoplasmic vesicle. The protein localises to the autophagosome. Functionally, plays a role in the translocation of terminally misfolded proteins from the endoplasmic reticulum lumen to the cytoplasm and their degradation by the proteasome. Plays a role in lipid droplet formation. Induces lipid droplet clustering. Recruits ubiquitin-conjugating enzyme UBE2G2 to lipid droplets which facilitates its interaction with ubiquitin ligases AMFR/gp78 and RNF139/TRC8, leading to sterol-induced ubiquitination of HMGCR and its subsequent proteasomal degradation. Also required for the degradation of INSIG1, SREBF1 and SREBF2. Plays a role in regulating assembly and secretion of very low density lipoprotein particles and stability of apolipoprotein APOB. (Microbial infection) Following Dengue virus infection, required for induction of lipophagy which facilitates production of virus progeny particles. This is Lipid droplet-regulating VLDL assembly factor AUP1 from Homo sapiens (Human).